A 360-amino-acid polypeptide reads, in one-letter code: Phospho-N-acetylmuramoyl-pentapeptide-transferase (360 aa).

10 consecutive transmembrane segments (helical) span residues 18–38 (VFSY…FLSL), 72–92 (PTMG…MWAY), 94–114 (SNPY…VGFV), 132–152 (WKYF…YAVG), 168–188 (IMPQ…VGTS), 199–219 (GLAI…AWAT), 236–256 (AGEL…FLWF), 263–283 (VFMG…IAVL), 288–308 (FLLL…ILQV), and 338–358 (VIVR…ATLK).

It belongs to the glycosyltransferase 4 family. MraY subfamily. Mg(2+) serves as cofactor.

The protein resides in the cell inner membrane. The enzyme catalyses UDP-N-acetyl-alpha-D-muramoyl-L-alanyl-gamma-D-glutamyl-meso-2,6-diaminopimeloyl-D-alanyl-D-alanine + di-trans,octa-cis-undecaprenyl phosphate = di-trans,octa-cis-undecaprenyl diphospho-N-acetyl-alpha-D-muramoyl-L-alanyl-D-glutamyl-meso-2,6-diaminopimeloyl-D-alanyl-D-alanine + UMP. It functions in the pathway cell wall biogenesis; peptidoglycan biosynthesis. Its function is as follows. Catalyzes the initial step of the lipid cycle reactions in the biosynthesis of the cell wall peptidoglycan: transfers peptidoglycan precursor phospho-MurNAc-pentapeptide from UDP-MurNAc-pentapeptide onto the lipid carrier undecaprenyl phosphate, yielding undecaprenyl-pyrophosphoryl-MurNAc-pentapeptide, known as lipid I. This Serratia proteamaculans (strain 568) protein is Phospho-N-acetylmuramoyl-pentapeptide-transferase.